Reading from the N-terminus, the 440-residue chain is C4-dicarboxylate transport protein (440 aa).

Helical transmembrane passes span 7-29 (LYKSLYVQVLVAITIGILLGHYY), 49-66 (MVIAPIIFCTVVSGIAGM), 79-101 (ALLYFEIVSTIALIIGLVVVNVV), 143-165 (VVGAFANGDILQVLMFSVLFGFA), 186-208 (VMFNIINMIMKLAPIGAFGAMAF), 221-243 (LGYLMACFYITCLLFVLVVLGGI), 291-313 (VVGLVIPTGYSFNLDGTSIYLTM), 328-350 (ITHQITLLLVLLVASKGAAGVTG), and 355-377 (VLAATLSAVGHLPVAGLALILGI). The tract at residues 419–440 (GGAPLIDTRPTDDLGVAEGPAR) is disordered.

The protein belongs to the dicarboxylate/amino acid:cation symporter (DAACS) (TC 2.A.23) family.

It localises to the cell inner membrane. Its function is as follows. Responsible for the transport of dicarboxylates such as succinate, fumarate, and malate from the periplasm across the membrane. The chain is C4-dicarboxylate transport protein from Pseudomonas putida (strain ATCC 47054 / DSM 6125 / CFBP 8728 / NCIMB 11950 / KT2440).